The sequence spans 282 residues: 4-hydroxy-tetrahydrodipicolinate reductase (282 aa).

NAD(+)-binding positions include glycine 14–methionine 19 and glycine 115–threonine 117. Histidine 171 serves as the catalytic Proton donor/acceptor. (S)-2,3,4,5-tetrahydrodipicolinate is bound at residue histidine 172. Lysine 175 functions as the Proton donor in the catalytic mechanism. Glycine 181–threonine 182 is a (S)-2,3,4,5-tetrahydrodipicolinate binding site.

This sequence belongs to the DapB family.

It localises to the cytoplasm. The enzyme catalyses (S)-2,3,4,5-tetrahydrodipicolinate + NAD(+) + H2O = (2S,4S)-4-hydroxy-2,3,4,5-tetrahydrodipicolinate + NADH + H(+). The catalysed reaction is (S)-2,3,4,5-tetrahydrodipicolinate + NADP(+) + H2O = (2S,4S)-4-hydroxy-2,3,4,5-tetrahydrodipicolinate + NADPH + H(+). It participates in amino-acid biosynthesis; L-lysine biosynthesis via DAP pathway; (S)-tetrahydrodipicolinate from L-aspartate: step 4/4. Functionally, catalyzes the conversion of 4-hydroxy-tetrahydrodipicolinate (HTPA) to tetrahydrodipicolinate. The sequence is that of 4-hydroxy-tetrahydrodipicolinate reductase from Prochlorococcus marinus (strain NATL2A).